The chain runs to 224 residues: Peroxiredoxin-6 (224 aa).

A Thioredoxin domain is found at L5 to L169. The segment at D31–P40 is required and sufficient for targeting to lysosomes and lamellar bodies. T44 carries the phosphothreonine modification. Catalysis depends on C47, which acts as the Cysteine sulfenic acid (-SOH) intermediate; for peroxidase activity. K63 carries the N6-acetyllysine modification. Position 89 is a phosphotyrosine (Y89). The active-site For phospholipase activity is the D140. At T177 the chain carries Phosphothreonine; by MAPK. At K209 the chain carries N6-acetyllysine; alternate. K209 carries the post-translational modification N6-succinyllysine; alternate.

It belongs to the peroxiredoxin family. Prx6 subfamily. In terms of assembly, homodimer. Interacts with GSTP1; mediates PRDX6 glutathionylation and regeneration. Interacts with APEX1. Interacts with STH. May interact with FAM168B. May interact with HTR2A. Post-translationally, irreversibly inactivated by overoxidation of Cys-47 to sulfinic acid (Cys-SO(2)H) and sulfonic acid (Cys-SO(3)H) forms upon oxidative stress. Phosphorylation at Thr-177 by MAP kinases increases the phospholipase activity of the enzyme. The phosphorylated form exhibits a greater lysophosphatidylcholine acyltransferase activity compared to the non-phosphorylated form.

It is found in the cytoplasm. Its subcellular location is the lysosome. It catalyses the reaction a hydroperoxide + 2 glutathione = an alcohol + glutathione disulfide + H2O. The enzyme catalyses a 1,2-diacyl-sn-glycero-3-phosphocholine + H2O = a 1-acyl-sn-glycero-3-phosphocholine + a fatty acid + H(+). It carries out the reaction a 1-acyl-sn-glycero-3-phosphocholine + an acyl-CoA = a 1,2-diacyl-sn-glycero-3-phosphocholine + CoA. The catalysed reaction is 1-hexadecanoyl-sn-glycero-3-phosphocholine + hexadecanoyl-CoA = 1,2-dihexadecanoyl-sn-glycero-3-phosphocholine + CoA. It catalyses the reaction 1,2-dihexadecanoyl-sn-glycero-3-phosphocholine + H2O = 1-hexadecanoyl-sn-glycero-3-phosphocholine + hexadecanoate + H(+). In terms of biological role, thiol-specific peroxidase that catalyzes the reduction of hydrogen peroxide and organic hydroperoxides to water and alcohols, respectively. Can reduce H(2)O(2) and short chain organic, fatty acid, and phospholipid hydroperoxides. Also has phospholipase activity, and can therefore either reduce the oxidized sn-2 fatty acyl group of phospholipids (peroxidase activity) or hydrolyze the sn-2 ester bond of phospholipids (phospholipase activity). These activities are dependent on binding to phospholipids at acidic pH and to oxidized phospholipds at cytosolic pH. Plays a role in cell protection against oxidative stress by detoxifying peroxides and in phospholipid homeostasis. Exhibits acyl-CoA-dependent lysophospholipid acyltransferase which mediates the conversion of lysophosphatidylcholine (1-acyl-sn-glycero-3-phosphocholine or LPC) into phosphatidylcholine (1,2-diacyl-sn-glycero-3-phosphocholine or PC). Shows a clear preference for LPC as the lysophospholipid and for palmitoyl CoA as the fatty acyl substrate. This Sus scrofa (Pig) protein is Peroxiredoxin-6 (PRDX6).